We begin with the raw amino-acid sequence, 131 residues long: MSFIKEFREFAMRGNVIDMAVGVIIGGAFGKIVSSLVADVIMPILSFFTSSVDFKDLHIVLKEATDKTPAMTLKYGMFIQNIFDFIIIAFAIFLMIKALNKLKKEEPKVEKVITPSNEEKLLTEIRDLLKK.

2 helical membrane-spanning segments follow: residues 21 to 41 and 76 to 96; these read VGVI…ADVI and GMFI…FLMI.

The protein belongs to the MscL family. Homopentamer.

The protein localises to the cell inner membrane. In terms of biological role, channel that opens in response to stretch forces in the membrane lipid bilayer. May participate in the regulation of osmotic pressure changes within the cell. This chain is Large-conductance mechanosensitive channel, found in Histophilus somni (strain 129Pt) (Haemophilus somnus).